Consider the following 529-residue polypeptide: ADP,ATP carrier protein 1 (529 aa).

Helical transmembrane passes span 24–44 (LKKVLPMFLMFFCISFNYTIL), 63–83 (IPFIKLWLVVPSAVVFMLIYA), 93–113 (ALFYAVLSPFVVFFALFPLVI), 124–144 (DFADTLQAILPSGFLGFIAML), 149–169 (FAAFYVLSELWGSVMLSLMFW), 184–204 (FYALFGVGANVALLISGPAIV), 220–240 (WGVTLYFLMAMFLCSCAIIAA), 284–304 (YMLLLALLVICYGVCINLVEV), 322–342 (AFMGTFSFWTGVVSVFVMLFI), 356–376 (ALVTPVMVLVTGAIFFALVIF), 381–401 (TGLVAALGTTPLMLAVVVGAV), and 463–483 (ISAMTPFLAVALFAIIMVWLT). Residues 509–520 (AAEKEASPAAKE) are compositionally biased toward low complexity. The interval 509 to 529 (AAEKEASPAAKEVSPAIEGVS) is disordered.

It belongs to the ADP/ATP translocase tlc family.

It localises to the cell membrane. The protein is ADP,ATP carrier protein 1 (tlcA) of Chlamydia muridarum (strain MoPn / Nigg).